Reading from the N-terminus, the 289-residue chain is Aquaporin PIP1-1 (289 aa).

Positions 1–36 (MEGKEEDVRLGANRYSERQPIGTAAQGAGDDKDYKE) are disordered. Transmembrane regions (helical) follow at residues 58 to 78 (IAEF…VMGV) and 93 to 115 (IAWS…SGGH). Positions 117-119 (NPA) match the NPA 1 motif. A run of 3 helical transmembrane segments spans residues 136–156 (IFYI…VKGF), 178–198 (GDGL…VFSA), and 212–232 (ILAP…TIPI). Residues 238-240 (NPA) carry the NPA 2 motif. A helical transmembrane segment spans residues 260–280 (IFWVGPFVGAALAAIYHQVII).

This sequence belongs to the MIP/aquaporin (TC 1.A.8) family. PIP (TC 1.A.8.11) subfamily. As to expression, expressed in roots, leaves and anthers.

Its subcellular location is the cell membrane. In terms of biological role, may function as water channel to facilitate the transport of water across cell membrane. The polypeptide is Aquaporin PIP1-1 (PIP1-1) (Oryza sativa subsp. japonica (Rice)).